The following is a 560-amino-acid chain: ATP synthase subunit beta, mitochondrial (560 aa).

Residues 1–54 constitute a mitochondrion transit peptide; it reads MASRRLLASLLRQSAQRGGGLISRSLGNSIPKSASRASSRASPKGFLLNRAVQY. 2 disordered regions span residues 20–44 and 58–81; these read GLIS…ASPK and AAAP…KITD. Low complexity-rich tracts occupy residues 33 to 42 and 58 to 71; these read SASRASSRAS and AAAP…PPKS. An ATP-binding site is contributed by 235–242; sequence GGAGVGKT.

Belongs to the ATPase alpha/beta chains family. In terms of assembly, F-type ATPases have 2 components, CF(1) - the catalytic core - and CF(0) - the membrane proton channel. CF(1) has five subunits: alpha(3), beta(3), gamma(1), delta(1), epsilon(1). CF(0) has three main subunits: a, b and c.

Its subcellular location is the mitochondrion. The protein resides in the mitochondrion inner membrane. The catalysed reaction is ATP + H2O + 4 H(+)(in) = ADP + phosphate + 5 H(+)(out). In terms of biological role, mitochondrial membrane ATP synthase (F(1)F(0) ATP synthase or Complex V) produces ATP from ADP in the presence of a proton gradient across the membrane which is generated by electron transport complexes of the respiratory chain. F-type ATPases consist of two structural domains, F(1) - containing the extramembraneous catalytic core, and F(0) - containing the membrane proton channel, linked together by a central stalk and a peripheral stalk. During catalysis, ATP synthesis in the catalytic domain of F(1) is coupled via a rotary mechanism of the central stalk subunits to proton translocation. Subunits alpha and beta form the catalytic core in F(1). Rotation of the central stalk against the surrounding alpha(3)beta(3) subunits leads to hydrolysis of ATP in three separate catalytic sites on the beta subunits. The chain is ATP synthase subunit beta, mitochondrial (ATPB) from Nicotiana plumbaginifolia (Leadwort-leaved tobacco).